We begin with the raw amino-acid sequence, 1873 residues long: Girdin (1873 aa).

Residues Gln-12–Ala-132 form the Calponin-homology (CH) domain. A coiled-coil region spans residues His-196–Glu-425. 3 positions are modified to phosphoserine: Ser-233, Ser-237, and Ser-449. 2 coiled-coil regions span residues Thr-458–Asn-1232 and His-1268–Asp-1385. Disordered stretches follow at residues Glu-816 to Leu-841 and Glu-1013 to Ser-1034. At Ser-1020 the chain carries Phosphoserine. At Ser-1387 the chain carries Phosphoserine. The segment at Arg-1390–Lys-1408 is phosphoinositide-binding. Positions Lys-1407 to Lys-1416 are enriched in basic and acidic residues. Disordered stretches follow at residues Lys-1407–Lys-1459, Thr-1560–Asn-1602, and Gln-1616–Pro-1643. Ser-1417 carries the post-translational modification Phosphoserine; by PKB/AKT1. Composition is skewed to polar residues over residues Ser-1417–Gly-1430, Val-1445–Lys-1459, Thr-1560–Ser-1579, and Gln-1616–Asp-1626. Thr-1421 carries the post-translational modification Phosphothreonine. The short motif at Lys-1674 to Ser-1704 is the GBA element. Phosphoserine is present on residues Ser-1677, Ser-1692, and Ser-1719. The tract at residues Ser-1715–Asp-1825 is SH2-like; required for interaction with growth factor receptors. The disordered stretch occupies residues Ser-1738–Ser-1873. The segment covering Phe-1745–Phe-1755 has biased composition (basic and acidic residues). Phosphotyrosine is present on Tyr-1767. Polar residues-rich tracts occupy residues Thr-1768–Gly-1781, Thr-1789–Tyr-1801, and Ser-1809–Arg-1820. Tyr-1801 carries the phosphotyrosine modification. Phosphoserine occurs at positions 1822 and 1839. Residues Ser-1822 to Arg-1832 are compositionally biased toward basic and acidic residues. Low complexity predominate over residues Ser-1839–Ser-1852. Over residues Gln-1858–Ser-1873 the composition is skewed to basic and acidic residues.

The protein belongs to the CCDC88 family. In terms of assembly, homodimer. Interacts (via GBA motif) with guanine nucleotide-binding protein G(i) alpha subunits GNAI1, GNAI2 and GNAI3. Also interacts (via GNA motif) with guanine nucleotide-binding protein G(s) alpha subunit GNAS. Interaction with G(i) alpha subunits occurs before interaction with GNAS and is regulated by phosphorylation; phosphorylation at Ser-1677 enhances binding to G(i) alpha subunits while phosphorylation at Ser-1692 abolishes G(i) alpha subunit binding, promoting binding to GNAS. Interacts (via C-terminal SH2-like region) with growth factor receptors EGFR, INSR and KDR/VEGFR2 (via their autophosphorylated cytoplasmic tails). Forms a complex with EGFR and GNAI3 which leads to enhanced EGFR signaling and triggering of cell migration; ligand stimulation is required for recruitment of GNAI3 to the complex. Interacts (tyrosine-phosphorylated form) with phosphatidylinositol 3-kinase (PI3K) regulatory subunit PIK3R1/p85a (via SH2 domains); the interaction enables recruitment of PIK3R1 to the EGFR receptor, enhancing PI3K activity and cell migration. Interacts with serine/threonine-protein kinase PRKCQ; the interaction leads to phosphorylation of CCDC88A and inhibition of its guanine nucleotide exchange factor activity. Interacts (via C-terminus) with DISC1; the interaction is direct. Interacts with AKT proteins; the interaction is inhibited in the presence of DISC1. Interacts with AKT1/PKB (via C-terminus). The non-phosphorylated form interacts with phosphatidylinositol 4-phosphate [Pi(4)P] and weakly with phosphatidylinositol 3-phosphate [Pi(3)P]. Interacts with microtubules. Interacts with actin. Post-translationally, phosphorylation is induced by epidermal growth factor (EGF) in a phosphoinositide 3-kinase (PI3K)-dependent manner. Phosphorylation by AKT1/PKB is necessary for the delocalization from the cell membrane and for cell migration. Phosphorylated on tyrosine residues which promotes binding to phosphatidylinositol 3-kinase (PI3K) regulatory subunit PIK3R1/p85a and enhances PI3K activity. Tyrosine-phosphorylated by both receptor and non-receptor tyrosine kinases in vitro. Tyrosine phosphorylation is required for AKT1-dependent phosphorylation of Ser-1417. Phosphorylation at Ser-1692 by PRKCQ disrupts interaction with GNAI3 and inhibits guanine nucleotide exchange factor activity. Expressed in the dentate gyrus, pyramidal cell layer of hippocampal regions CA1 and CA3 at postnatal 15. Expressed highly in neurons. Weakly in neuron progenitors (at protein level). Expressed in the dentate granule cell layer of the hippocampus. Expressed highly in the adult testis, moderately in the brain and at a low level in the spleen, lungs and fat.

Its subcellular location is the cell membrane. The protein localises to the cytoplasm. It localises to the cytosol. It is found in the cytoplasmic vesicle. The protein resides in the cell projection. Its subcellular location is the lamellipodium. The protein localises to the cytoskeleton. It localises to the cilium basal body. It is found in the microtubule organizing center. The protein resides in the centrosome. Its subcellular location is the centriole. Bifunctional modulator of guanine nucleotide-binding proteins (G proteins). Acts as a non-receptor guanine nucleotide exchange factor which binds to and activates guanine nucleotide-binding protein G(i) alpha subunits. Also acts as a guanine nucleotide dissociation inhibitor for guanine nucleotide-binding protein G(s) subunit alpha GNAS. Essential for cell migration. Interacts in complex with G(i) alpha subunits with the EGFR receptor, retaining EGFR at the cell membrane following ligand stimulation and promoting EGFR signaling which triggers cell migration. Binding to Gi-alpha subunits displaces the beta and gamma subunits from the heterotrimeric G-protein complex which enhances phosphoinositide 3-kinase (PI3K)-dependent phosphorylation and kinase activity of AKT1/PKB. Phosphorylation of AKT1/PKB induces the phosphorylation of downstream effectors GSK3 and FOXO1/FKHR, and regulates DNA replication and cell proliferation. Binds in its tyrosine-phosphorylated form to the phosphatidylinositol 3-kinase (PI3K) regulatory subunit PIK3R1 which enables recruitment of PIK3R1 to the EGFR receptor, enhancing PI3K activity and cell migration. Plays a role as a key modulator of the AKT-mTOR signaling pathway, controlling the tempo of the process of newborn neuron integration during adult neurogenesis, including correct neuron positioning, dendritic development and synapse formation. Inhibition of G(s) subunit alpha GNAS leads to reduced cellular levels of cAMP and suppression of cell proliferation. Essential for the integrity of the actin cytoskeleton. Required for formation of actin stress fibers and lamellipodia. May be involved in membrane sorting in the early endosome. Plays a role in ciliogenesis and cilium morphology and positioning and this may partly be through regulation of the localization of scaffolding protein CROCC/Rootletin. The chain is Girdin (Ccdc88a) from Mus musculus (Mouse).